Here is a 227-residue protein sequence, read N- to C-terminus: Cytochrome c oxidase subunit 2 (227 aa).

The Mitochondrial intermembrane segment spans residues 1-14; it reads MAYPFQLGLQDATS. A helical transmembrane segment spans residues 15-45; the sequence is PIMEELLHFHDHTLMIVFLISSLVLYIISSM. Residues 46 to 59 lie on the Mitochondrial matrix side of the membrane; the sequence is LTTKLTHTSTMDAQ. The helical transmembrane segment at 60–87 threads the bilayer; it reads EVETVWTILPAIILVLIALPSLRILYMM. The Mitochondrial intermembrane segment spans residues 88–227; it reads DETNNPSLTV…YFETWSALMV (140 aa). Cu cation is bound by residues His161, Cys196, Glu198, Cys200, His204, and Met207. Residue Glu198 coordinates Mg(2+). At Tyr218 the chain carries Phosphotyrosine.

The protein belongs to the cytochrome c oxidase subunit 2 family. In terms of assembly, component of the cytochrome c oxidase (complex IV, CIV), a multisubunit enzyme composed of 14 subunits. The complex is composed of a catalytic core of 3 subunits MT-CO1, MT-CO2 and MT-CO3, encoded in the mitochondrial DNA, and 11 supernumerary subunits COX4I, COX5A, COX5B, COX6A, COX6B, COX6C, COX7A, COX7B, COX7C, COX8 and NDUFA4, which are encoded in the nuclear genome. The complex exists as a monomer or a dimer and forms supercomplexes (SCs) in the inner mitochondrial membrane with NADH-ubiquinone oxidoreductase (complex I, CI) and ubiquinol-cytochrome c oxidoreductase (cytochrome b-c1 complex, complex III, CIII), resulting in different assemblies (supercomplex SCI(1)III(2)IV(1) and megacomplex MCI(2)III(2)IV(2)). Found in a complex with TMEM177, COA6, COX18, COX20, SCO1 and SCO2. Interacts with TMEM177 in a COX20-dependent manner. Interacts with COX20. Interacts with COX16. Requires Cu cation as cofactor.

Its subcellular location is the mitochondrion inner membrane. The catalysed reaction is 4 Fe(II)-[cytochrome c] + O2 + 8 H(+)(in) = 4 Fe(III)-[cytochrome c] + 2 H2O + 4 H(+)(out). Component of the cytochrome c oxidase, the last enzyme in the mitochondrial electron transport chain which drives oxidative phosphorylation. The respiratory chain contains 3 multisubunit complexes succinate dehydrogenase (complex II, CII), ubiquinol-cytochrome c oxidoreductase (cytochrome b-c1 complex, complex III, CIII) and cytochrome c oxidase (complex IV, CIV), that cooperate to transfer electrons derived from NADH and succinate to molecular oxygen, creating an electrochemical gradient over the inner membrane that drives transmembrane transport and the ATP synthase. Cytochrome c oxidase is the component of the respiratory chain that catalyzes the reduction of oxygen to water. Electrons originating from reduced cytochrome c in the intermembrane space (IMS) are transferred via the dinuclear copper A center (CU(A)) of subunit 2 and heme A of subunit 1 to the active site in subunit 1, a binuclear center (BNC) formed by heme A3 and copper B (CU(B)). The BNC reduces molecular oxygen to 2 water molecules using 4 electrons from cytochrome c in the IMS and 4 protons from the mitochondrial matrix. The sequence is that of Cytochrome c oxidase subunit 2 (MT-CO2) from Chrysocyon brachyurus (Maned wolf).